A 216-amino-acid chain; its full sequence is MQLPFPLAEEPDAAAMETGRKLFAGQSEFLKGVVAMSGLPPADRIEVCFAGRSNVGKSSLINALTGTKGLARASNTPGRTQEINFFTQGPELYLVDLPGYGYANAPLAVVEKWQRLLKQYLSGRQTLRRAFVLIDTRHGVKKVDEEIMKLLDTSAVTFQVVMTKADKVKEKDRAKILDQVRDALSKHPAAYPEIVLTSSEKGDGIATLRSIIAHLD.

The 174-residue stretch at 43–216 (DRIEVCFAGR…TLRSIIAHLD (174 aa)) folds into the EngB-type G domain. GTP-binding positions include 51–58 (GRSNVGKS), 78–82 (GRTQE), 96–99 (DLPG), 163–166 (TKAD), and 197–199 (TSS). S58 and T80 together coordinate Mg(2+).

It belongs to the TRAFAC class TrmE-Era-EngA-EngB-Septin-like GTPase superfamily. EngB GTPase family. It depends on Mg(2+) as a cofactor.

Its function is as follows. Necessary for normal cell division and for the maintenance of normal septation. This is Probable GTP-binding protein EngB from Ruegeria sp. (strain TM1040) (Silicibacter sp.).